The following is a 125-amino-acid chain: Large ribosomal subunit protein uL22 (125 aa).

The protein belongs to the universal ribosomal protein uL22 family. As to quaternary structure, part of the 50S ribosomal subunit.

Functionally, this protein binds specifically to 23S rRNA; its binding is stimulated by other ribosomal proteins, e.g. L4, L17, and L20. It is important during the early stages of 50S assembly. It makes multiple contacts with different domains of the 23S rRNA in the assembled 50S subunit and ribosome. The globular domain of the protein is located near the polypeptide exit tunnel on the outside of the subunit, while an extended beta-hairpin is found that lines the wall of the exit tunnel in the center of the 70S ribosome. The protein is Large ribosomal subunit protein uL22 of Thermobifida fusca (strain YX).